Reading from the N-terminus, the 416-residue chain is MRRTQQGTTASPPVLDLGALGQDFAADPYPTYARLRAEGPAHRVRTPEGDEVWLVVGYDRARAVLADPRFSKDWRNSTTPLTEAEAALNHNMLESDPPRHTRLRKLVAREFTMRRVELLRPRVQEIVDGLVDAMLAAPDGRADLMESLAWPLPITVISELLGVPEPDRAAFRVWTDAFVFPDDPAQAQTAMAEMSGYLSRLIDSKRGQDGEDLLSALVRTSDEDGSRLTSEELLGMAHILLVAGHETTVNLIANGMYALLSHPDQLAALRADMTLLDGAVEEMLRYEGPVESATYRFPVEPVDLDGTVIPAGDTVLVVLADAHRTPERFPDPHRFDIRRDTAGHLAFGHGIHFCIGAPLARLEARIAVRALLERCPDLALDVSPGELVWYPNPMIRGLKALPIRWRRGREAGRRTG.

Substrate-binding positions include Glu94, 187–191, and 238–246; these read AQTAM and HILLVAGHE. Residue Cys354 coordinates heme.

Belongs to the cytochrome P450 family. Heme is required as a cofactor.

The enzyme catalyses narbomycin + 2 reduced [2Fe-2S]-[ferredoxin] + O2 + 2 H(+) = pikromycin + 2 oxidized [2Fe-2S]-[ferredoxin] + H2O. The catalysed reaction is narbomycin + 2 reduced [2Fe-2S]-[ferredoxin] + O2 + 2 H(+) = neopikromycin + 2 oxidized [2Fe-2S]-[ferredoxin] + H2O. It catalyses the reaction narbomycin + 4 reduced [2Fe-2S]-[ferredoxin] + 2 O2 + 4 H(+) = novapikromycin + 4 oxidized [2Fe-2S]-[ferredoxin] + 2 H2O. It carries out the reaction 10-deoxymethymycin + 2 reduced [2Fe-2S]-[ferredoxin] + O2 + 2 H(+) = methymycin + 2 oxidized [2Fe-2S]-[ferredoxin] + H2O. The enzyme catalyses 10-deoxymethymycin + 2 reduced [2Fe-2S]-[ferredoxin] + O2 + 2 H(+) = neomethymycin + 2 oxidized [2Fe-2S]-[ferredoxin] + H2O. The catalysed reaction is 10-deoxymethymycin + 4 reduced [2Fe-2S]-[ferredoxin] + 2 O2 + 4 H(+) = novamethymycin + 4 oxidized [2Fe-2S]-[ferredoxin] + 2 H2O. It functions in the pathway antibiotic biosynthesis. Functionally, catalyzes the hydroxylation of narbomycin to give rise to pikromycin, and of 10-deoxymethymycin (YC-17) to give rise to methymycin and neomethymycin during macrolide antibiotic biosynthesis. In addition, produces low amounts of neopicromycin, novapikromycin and novamethymycin. Requires the participation of a ferredoxin and a ferredoxin reductase for the transfer of electrons from NADPH to the monooxygenase. This Streptomyces venezuelae protein is Cytochrome P450 monooxygenase PikC.